The chain runs to 445 residues: MSNRKYFGTDGIRGRVGDAPITPDFVLKLGWAAGKVLARHGSRKIIIGKDTRISGYMLESALEAGLAAAGLSALFTGPMPTPAVAYLTRTFRAEAGIVISASHNPFYDNGIKFFSIDGTKLPDAVEEAIEAEMEKEISCVYSAELGKASRIVDAAGRYIEFCKATFPNELSLSELKIVVDCANGATYHIAPNVLRELGANVIAIGCEPNGVNINAEVGATDVRALQARVLAEKADLGIAFDGDGDRVIMVDHEGNKVDGDQIMYIIAREGLRQGQLRGGAVGTLMSNMGLELALKQLGIPFARAKVGDRYVLEKMQEKGWRIGAENSGHVILLDKTTTGDGIVAGLQVLAAMARNHMSLHDLCSGMKMFPQILVNVRYTAGSGDPLEHESVKAVSAEVEAALGSRGRVLLRKSGTEPLIRVMVEGEDEAQVTEFAHRIADAVKAV.

Ser-102 acts as the Phosphoserine intermediate in catalysis. 4 residues coordinate Mg(2+): Ser-102, Asp-241, Asp-243, and Asp-245. Residue Ser-102 is modified to Phosphoserine.

It belongs to the phosphohexose mutase family. Mg(2+) is required as a cofactor. Post-translationally, activated by phosphorylation.

The catalysed reaction is alpha-D-glucosamine 1-phosphate = D-glucosamine 6-phosphate. Its function is as follows. Catalyzes the conversion of glucosamine-6-phosphate to glucosamine-1-phosphate. This is Phosphoglucosamine mutase from Shigella dysenteriae serotype 1 (strain Sd197).